Here is a 196-residue protein sequence, read N- to C-terminus: Gastrula zinc finger protein XlCGF64.1 (196 aa).

7 consecutive C2H2-type zinc fingers follow at residues 6-28 (YECPECGKTFKYKNSLTIHQRGH), 34-56 (FMCTQCGKCFRQKKALRRHQFIH), 62-84 (YVCTECEKRFLEKSQLILHQRGH), 90-112 (FTCTECGESFRHKQVLMRHQFIH), 118-140 (YECTQCGEGFLLKSKLIHHQRGH), 146-168 (FMCTECGKGFRQKQVLIEHQFIH), and 174-196 (LMCTDCGKHFRQKHVLRLHKLSH).

Belongs to the krueppel C2H2-type zinc-finger protein family.

The protein localises to the nucleus. In terms of biological role, may be involved in transcriptional regulation. This is Gastrula zinc finger protein XlCGF64.1 from Xenopus laevis (African clawed frog).